We begin with the raw amino-acid sequence, 180 residues long: 6,7-dimethyl-8-ribityllumazine synthase (180 aa).

Residues F23, 61–63 (SFE), and 85–87 (AVI) contribute to the 5-amino-6-(D-ribitylamino)uracil site. 90 to 91 (QT) contributes to the (2S)-2-hydroxy-3-oxobutyl phosphate binding site. H93 acts as the Proton donor in catalysis. Residue F118 coordinates 5-amino-6-(D-ribitylamino)uracil. R132 lines the (2S)-2-hydroxy-3-oxobutyl phosphate pocket.

It belongs to the DMRL synthase family.

It catalyses the reaction (2S)-2-hydroxy-3-oxobutyl phosphate + 5-amino-6-(D-ribitylamino)uracil = 6,7-dimethyl-8-(1-D-ribityl)lumazine + phosphate + 2 H2O + H(+). The protein operates within cofactor biosynthesis; riboflavin biosynthesis; riboflavin from 2-hydroxy-3-oxobutyl phosphate and 5-amino-6-(D-ribitylamino)uracil: step 1/2. Functionally, catalyzes the formation of 6,7-dimethyl-8-ribityllumazine by condensation of 5-amino-6-(D-ribitylamino)uracil with 3,4-dihydroxy-2-butanone 4-phosphate. This is the penultimate step in the biosynthesis of riboflavin. The chain is 6,7-dimethyl-8-ribityllumazine synthase from Gloeobacter violaceus (strain ATCC 29082 / PCC 7421).